The primary structure comprises 121 residues: Protein GAT4 (121 aa).

Residues 29 to 48 (EAQHGLPRNADSQPARPRTG) are disordered. The segment at 53–79 (CGQCGEIKTSLQWREGPNGAACLCNAC) adopts a GATA-type zinc-finger fold.

In Saccharomyces cerevisiae (strain ATCC 204508 / S288c) (Baker's yeast), this protein is Protein GAT4 (GAT4).